Here is a 119-residue protein sequence, read N- to C-terminus: Histone H1B, sperm (119 aa).

The H15 domain maps to 8 to 77 (THPPVATAVV…QNKGSFRVNK (70 aa)). Residues 76 to 119 (NKTALPKKKKAAKKPKAKKVKKPKSAAKKKTNRARAPKTKKNRN) form a disordered region. Positions 80-119 (LPKKKKAAKKPKAKKVKKPKSAAKKKTNRARAPKTKKNRN) are enriched in basic residues.

It belongs to the histone H1/H5 family.

Its subcellular location is the nucleus. The protein resides in the chromosome. Its function is as follows. Histones H1 are necessary for the condensation of nucleosome chains into higher-order structures. The polypeptide is Histone H1B, sperm (Platynereis dumerilii (Dumeril's clam worm)).